The chain runs to 214 residues: MVSRYSAYRRGPDVISPDVIDRILVGACAAVWLVFTGVSVAAAVALMDLGRGFHEMAGNPHTTWVLYAVIVVSALVIVGAIPVLLRARRMAEAEPATRPTGASVRGGRSIGSGHPAKRAVAESAPVQHADAFEVAAEWSSEAVDRIWLRGTVVLTSAIGIALIAVAAATYLMAVGHDGPSWISYGLAGVVTAGMPVIEWLYARQLRRVVAPQSS.

Transmembrane regions (helical) follow at residues 23–43 and 65–85; these read ILVGACAAVWLVFTGVSVAAA and VLYAVIVVSALVIVGAIPVLL. The segment at 96–115 is disordered; that stretch reads ATRPTGASVRGGRSIGSGHP. The next 2 helical transmembrane spans lie at 152 to 172 and 181 to 201; these read VVLTSAIGIALIAVAAATYLM and WISYGLAGVVTAGMPVIEWLY.

It localises to the cell membrane. This is an uncharacterized protein from Mycobacterium tuberculosis (strain CDC 1551 / Oshkosh).